A 68-amino-acid polypeptide reads, in one-letter code: Venom-like beta-defensin (68 aa).

A signal peptide spans 1-24 (MRLLILFLAVVTLLSLAGPGSAEV). 3 cysteine pairs are disulfide-bonded: C33–C60, C40–C54, and C47–C61.

As to expression, highly expressed in intestine, liver and spleen and expressed at lower levels in brain, kidney, lung, testis and venom gland.

The protein localises to the secreted. Functionally, potent antimicrobial peptide that displays activity against S.aureus and P.aeruginosa. Does not inhibit growth of E.coli. The protein is Venom-like beta-defensin of Ornithorhynchus anatinus (Duckbill platypus).